Reading from the N-terminus, the 180-residue chain is Protein GrpE (180 aa).

Residues 1–25 (MSKKKAEDKQPIIKDEAVEEPKSDS) are disordered.

The protein belongs to the GrpE family. In terms of assembly, homodimer.

The protein localises to the cytoplasm. In terms of biological role, participates actively in the response to hyperosmotic and heat shock by preventing the aggregation of stress-denatured proteins, in association with DnaK and GrpE. It is the nucleotide exchange factor for DnaK and may function as a thermosensor. Unfolded proteins bind initially to DnaJ; upon interaction with the DnaJ-bound protein, DnaK hydrolyzes its bound ATP, resulting in the formation of a stable complex. GrpE releases ADP from DnaK; ATP binding to DnaK triggers the release of the substrate protein, thus completing the reaction cycle. Several rounds of ATP-dependent interactions between DnaJ, DnaK and GrpE are required for fully efficient folding. This Fructilactobacillus sanfranciscensis (Lactobacillus sanfranciscensis) protein is Protein GrpE.